The following is a 740-amino-acid chain: MLKLFSAFRKNKIWDFNGGIHPPEMKTQSNGTPLRQVPLAQRFVIPLKQHIGAEGELCVSVGDKVLRGQPLTRGRGKMLPVHAPTSGTVTAIAPHSTAHPSALAELSVIIDADGEDCWIPRDGWADYRSRRREELIERIHQFGVAGLGGAGFPTGVKLQGGGDKIETLIINAAECEPYITADDRLMQDCAAQVVEGIRILAHILQPREILIGIEDNKPQAISMLRAVLADSHDISMRVIPTKYPSGGAKQLTYILTGKQVPHGGRSSDIGVLMQNVGTAYAVKRAVIDGEPITERVVTLTGEAIARPGNVWARLGTPVRHLLNDAGFCPSADQMVIMGGPLMGFTLPWLDVPVVKITNCLLAPSANELGEPQEEQSCIRCSACADACPADLLPQQLYWFSKGQQHDKATTHNIADCIECGACAWVCPSNIPLVQYFRQEKAEIAAIRQEEKRAAEAKARFEARLARLEREKAARLERHKSAAVQPAAKDKDAIAAALARVKEKQAQATQPIVIKAGERPDNSAIIAAREARKAQARAKQAELQQTNDAATVTDPRKTAVEAAIARAKARKLEQQQANAEPEQQVDPRKAAVEAAIARAKARKLEQQQANAEPEQQVDPRKAAVEAAIARAKARKLEQQQANAEPEEPVDPRKAAVEAAITRAKARKLEQQQANAEPEEQVDPRKAAVAAAIARAKARKLEQQQANAEPEEQVDPRKAAVAAAIARVQAKKAVQQKVVNED.

2 4Fe-4S ferredoxin-type domains span residues Gly369 to Tyr397 and Lys407 to Phe436. Cys377, Cys380, Cys383, Cys387, Cys416, Cys419, Cys422, and Cys426 together coordinate [4Fe-4S] cluster. 3 disordered regions span residues Lys602 to Lys652, Ala664 to Ala685, and Lys695 to Pro714. A compositionally biased stretch (low complexity) spans Gln605–Gln615.

This sequence belongs to the 4Fe4S bacterial-type ferredoxin family. RnfC subfamily. The complex is composed of six subunits: RsxA, RsxB, RsxC, RsxD, RsxE and RsxG. Requires [4Fe-4S] cluster as cofactor.

It localises to the cell inner membrane. In terms of biological role, part of a membrane-bound complex that couples electron transfer with translocation of ions across the membrane. Required to maintain the reduced state of SoxR. In Escherichia coli O157:H7, this protein is Ion-translocating oxidoreductase complex subunit C.